The primary structure comprises 280 residues: MTRSPWKRLLWLKQEYPDNYTDPSFIELRARQKAESNQKSDRKLSEAARAQIRLDFISFYQTILNTSFIYITFTYIYYYGFDPIPPTIFLSFITLIISRTKVDPLLSSFMDVKSSLIITFAMLTLSPVLKSLSKTTASDSIWTLSFWLTLWYIFVISSTKSKDKPSNLSTNILVALVAVLSSRLSTTIDVFCFLLICIQLNIILPTYLSVTNKVVPIISNIIVYSFLNVALGWIYMLLIFFASVFYITVLPKWFIYWKINYHKRDNDLLSTWDARTPILD.

Topologically, residues 1–53 (MTRSPWKRLLWLKQEYPDNYTDPSFIELRARQKAESNQKSDRKLSEAARAQIR) are cytoplasmic. Residues 54–74 (LDFISFYQTILNTSFIYITFT) traverse the membrane as a helical segment. Residue Y75 is a topological domain, extracellular. A helical membrane pass occupies residues 76–96 (IYYYGFDPIPPTIFLSFITLI). Over 97–108 (ISRTKVDPLLSS) the chain is Cytoplasmic. The helical transmembrane segment at 109 to 129 (FMDVKSSLIITFAMLTLSPVL) threads the bilayer. The Extracellular portion of the chain corresponds to 130-135 (KSLSKT). The chain crosses the membrane as a helical span at residues 136–156 (TASDSIWTLSFWLTLWYIFVI). The Cytoplasmic portion of the chain corresponds to 157-189 (SSTKSKDKPSNLSTNILVALVAVLSSRLSTTID). The helical transmembrane segment at 190-210 (VFCFLLICIQLNIILPTYLSV) threads the bilayer. The Extracellular segment spans residues 211–220 (TNKVVPIISN). Residues 221–241 (IIVYSFLNVALGWIYMLLIFF) form a helical membrane-spanning segment. At 242–280 (ASVFYITVLPKWFIYWKINYHKRDNDLLSTWDARTPILD) the chain is on the cytoplasmic side.

Belongs to the PIGC family. Component of the phosphatidylinositol N-acetylglucosaminyltransferase (GPI-GlcNAc transferase) complex composed of at least GPI1, GPI2, GPI3, GPI15, GPI19 and ERI1. Interacts with ERI1.

Its subcellular location is the membrane. The enzyme catalyses a 1,2-diacyl-sn-glycero-3-phospho-(1D-myo-inositol) + UDP-N-acetyl-alpha-D-glucosamine = a 6-(N-acetyl-alpha-D-glucosaminyl)-1-(1,2-diacyl-sn-glycero-3-phospho)-1D-myo-inositol + UDP + H(+). Its pathway is glycolipid biosynthesis; glycosylphosphatidylinositol-anchor biosynthesis. Part of the complex catalyzing the transfer of N-acetylglucosamine from UDP-N-acetylglucosamine to phosphatidylinositol, the first step of GPI biosynthesis. This is Phosphatidylinositol N-acetylglucosaminyltransferase GPI2 subunit (GPI2) from Saccharomyces cerevisiae (strain ATCC 204508 / S288c) (Baker's yeast).